A 294-amino-acid chain; its full sequence is ATP synthase gamma chain (294 aa).

It belongs to the ATPase gamma chain family. F-type ATPases have 2 components, CF(1) - the catalytic core - and CF(0) - the membrane proton channel. CF(1) has five subunits: alpha(3), beta(3), gamma(1), delta(1), epsilon(1). CF(0) has three main subunits: a, b and c.

It is found in the cell inner membrane. Produces ATP from ADP in the presence of a proton gradient across the membrane. The gamma chain is believed to be important in regulating ATPase activity and the flow of protons through the CF(0) complex. The protein is ATP synthase gamma chain of Campylobacter jejuni subsp. doylei (strain ATCC BAA-1458 / RM4099 / 269.97).